Consider the following 186-residue polypeptide: D-glycero-beta-D-manno-heptose-1,7-bisphosphate 7-phosphatase (186 aa).

Catalysis depends on aspartate 9, which acts as the Nucleophile. Residues aspartate 9 and aspartate 11 each contribute to the Mg(2+) site. Substrate contacts are provided by residues 9–11 (DRD), 17–20 (DHGY), and 51–54 (TNQS). Aspartate 11 acts as the Proton donor in catalysis. The Zn(2+) site is built by cysteine 90, histidine 92, cysteine 105, and cysteine 107. A substrate-binding site is contributed by 108–109 (RK). Positions 134 and 135 each coordinate Mg(2+). Lysine 135 serves as a coordination point for substrate.

The protein belongs to the GmhB family. Monomer. It depends on Mg(2+) as a cofactor. Zn(2+) serves as cofactor.

The protein resides in the cytoplasm. The enzyme catalyses D-glycero-beta-D-manno-heptose 1,7-bisphosphate + H2O = D-glycero-beta-D-manno-heptose 1-phosphate + phosphate. The protein operates within nucleotide-sugar biosynthesis; ADP-L-glycero-beta-D-manno-heptose biosynthesis; ADP-L-glycero-beta-D-manno-heptose from D-glycero-beta-D-manno-heptose 7-phosphate: step 2/4. It functions in the pathway bacterial outer membrane biogenesis; LPS core biosynthesis. Converts the D-glycero-beta-D-manno-heptose 1,7-bisphosphate intermediate into D-glycero-beta-D-manno-heptose 1-phosphate by removing the phosphate group at the C-7 position in vitro. Also catalyzes the dephosphorylation of D-glycero-alpha-D-manno-heptose-1,7-bisphosphate in vitro. This Vibrio cholerae serotype O1 (strain ATCC 39315 / El Tor Inaba N16961) protein is D-glycero-beta-D-manno-heptose-1,7-bisphosphate 7-phosphatase (gmhB).